A 461-amino-acid chain; its full sequence is V-type ATP synthase beta chain (461 aa).

Belongs to the ATPase alpha/beta chains family.

In terms of biological role, produces ATP from ADP in the presence of a proton gradient across the membrane. The V-type beta chain is a regulatory subunit. The polypeptide is V-type ATP synthase beta chain (Clostridium botulinum (strain ATCC 19397 / Type A)).